Reading from the N-terminus, the 231-residue chain is 7-cyano-7-deazaguanine synthase (231 aa).

8–18 (FSGGQDSTTCL) provides a ligand contact to ATP. Residues Cys-188, Cys-197, Cys-200, and Cys-203 each contribute to the Zn(2+) site.

This sequence belongs to the QueC family. The cofactor is Zn(2+).

The enzyme catalyses 7-carboxy-7-deazaguanine + NH4(+) + ATP = 7-cyano-7-deazaguanine + ADP + phosphate + H2O + H(+). The protein operates within purine metabolism; 7-cyano-7-deazaguanine biosynthesis. Functionally, catalyzes the ATP-dependent conversion of 7-carboxy-7-deazaguanine (CDG) to 7-cyano-7-deazaguanine (preQ(0)). The sequence is that of 7-cyano-7-deazaguanine synthase from Escherichia fergusonii (strain ATCC 35469 / DSM 13698 / CCUG 18766 / IAM 14443 / JCM 21226 / LMG 7866 / NBRC 102419 / NCTC 12128 / CDC 0568-73).